Reading from the N-terminus, the 338-residue chain is Formimidoylglutamase (338 aa).

Positions 137, 166, 168, 170, 259, and 261 each coordinate Mn(2+).

This sequence belongs to the arginase family. The cofactor is Mn(2+).

It carries out the reaction N-formimidoyl-L-glutamate + H2O = formamide + L-glutamate. The protein operates within amino-acid degradation; L-histidine degradation into L-glutamate; L-glutamate from N-formimidoyl-L-glutamate (hydrolase route): step 1/1. Catalyzes the conversion of N-formimidoyl-L-glutamate to L-glutamate and formamide. The protein is Formimidoylglutamase of Clostridium tetani (strain Massachusetts / E88).